The primary structure comprises 232 residues: Large ribosomal subunit protein uL1 (232 aa).

It belongs to the universal ribosomal protein uL1 family. In terms of assembly, part of the 50S ribosomal subunit.

Its function is as follows. Binds directly to 23S rRNA. The L1 stalk is quite mobile in the ribosome, and is involved in E site tRNA release. Functionally, protein L1 is also a translational repressor protein, it controls the translation of the L11 operon by binding to its mRNA. This chain is Large ribosomal subunit protein uL1, found in Burkholderia cenocepacia (strain ATCC BAA-245 / DSM 16553 / LMG 16656 / NCTC 13227 / J2315 / CF5610) (Burkholderia cepacia (strain J2315)).